A 666-amino-acid polypeptide reads, in one-letter code: Probable potassium transport system protein Kup (666 aa).

12 helical membrane passes run 16-36, 58-78, 100-120, 141-161, 165-185, 221-241, 253-273, 294-314, 343-363, 373-393, 399-419, and 424-444; these read GFII…LYTM, ISLI…LIAL, PWLI…GALT, IYQN…VLFG, FGTG…FSFL, IFIL…YSDL, WPFV…WILA, VYLV…LISG, LYIP…VLAF, YGLA…YYLI, PILA…FFLA, and FMHG…VMFI.

This sequence belongs to the HAK/KUP transporter (TC 2.A.72) family.

It localises to the cell membrane. It carries out the reaction K(+)(in) + H(+)(in) = K(+)(out) + H(+)(out). Transport of potassium into the cell. Likely operates as a K(+):H(+) symporter. This is Probable potassium transport system protein Kup from Streptococcus pyogenes serotype M4 (strain MGAS10750).